The sequence spans 161 residues: Probable metalloprotease HVO_1016 (161 aa).

The 122-residue stretch at 10–131 folds into the MPN domain; that stretch reads VGIAADALDF…WEAFDQSGEV (122 aa). Glu31 acts as the Proton donor/acceptor in catalysis. Zn(2+) is bound by residues His87, His89, and Asp100. Positions 87 to 100 match the JAMM motif motif; it reads HSHPNGVLRPSDAD.

The protein belongs to the peptidase M67B family. In terms of assembly, monomer and homodimer. It depends on Zn(2+) as a cofactor.

Probable metalloprotease. Does not hydrolyze SAMP1- and SAMP2-protein conjugates, diglycine-AMC, Ub-AMC, hemoglobin, cytochrome c, carbonic anhydrase, creatinine phosphokinase, beta-amylase and bovine serum albumin. In Haloferax volcanii (strain ATCC 29605 / DSM 3757 / JCM 8879 / NBRC 14742 / NCIMB 2012 / VKM B-1768 / DS2) (Halobacterium volcanii), this protein is Probable metalloprotease HVO_1016.